The primary structure comprises 150 residues: SsrA-binding protein (150 aa).

The protein belongs to the SmpB family.

Its subcellular location is the cytoplasm. Required for rescue of stalled ribosomes mediated by trans-translation. Binds to transfer-messenger RNA (tmRNA), required for stable association of tmRNA with ribosomes. tmRNA and SmpB together mimic tRNA shape, replacing the anticodon stem-loop with SmpB. tmRNA is encoded by the ssrA gene; the 2 termini fold to resemble tRNA(Ala) and it encodes a 'tag peptide', a short internal open reading frame. During trans-translation Ala-aminoacylated tmRNA acts like a tRNA, entering the A-site of stalled ribosomes, displacing the stalled mRNA. The ribosome then switches to translate the ORF on the tmRNA; the nascent peptide is terminated with the 'tag peptide' encoded by the tmRNA and targeted for degradation. The ribosome is freed to recommence translation, which seems to be the essential function of trans-translation. This is SsrA-binding protein from Thermotoga maritima (strain ATCC 43589 / DSM 3109 / JCM 10099 / NBRC 100826 / MSB8).